The sequence spans 284 residues: Gap junction beta-1 protein (284 aa).

The Cytoplasmic portion of the chain corresponds to 1-22 (MNWTGLYTLLSGVNRHSTAIGR). The helical transmembrane segment at 23 to 45 (VWLSVIFIFRIMVLVVAAESVWG) threads the bilayer. Residues 46–75 (DEKSSFICNTLQPGCNSVCYDHFFPISHVR) lie on the Extracellular side of the membrane. Residues 76-95 (LWSLQLILVSTPALLVAMHV) form a helical membrane-spanning segment. Residues 96–130 (AHQQHIEKKMLRLEGHGDPLHLEEVKRHKVHISGT) are Cytoplasmic-facing. Residues 131–153 (LWWTYVISVVFRLLFEAAFMYVF) form a helical membrane-spanning segment. Topologically, residues 154 to 191 (YLLYPGYAMVRLVKCDAYPCPNTVDCFVSRPTEKTIFT) are extracellular. Residues 192-214 (VFMLAASGICIILNVAEVVYLIF) traverse the membrane as a helical segment. Topologically, residues 215–284 (RACARRAQRR…AEKSDRCSAC (70 aa)) are cytoplasmic. A phosphoserine mark is found at serine 233, serine 259, serine 267, and serine 278.

Belongs to the connexin family. Beta-type (group I) subfamily. In terms of assembly, a connexon is composed of a hexamer of connexins. Interacts with CNST.

It localises to the cell membrane. The protein localises to the cell junction. The protein resides in the gap junction. Its function is as follows. One gap junction consists of a cluster of closely packed pairs of transmembrane channels, the connexons, through which materials of low MW diffuse from one cell to a neighboring cell. This chain is Gap junction beta-1 protein (GJB1), found in Bos taurus (Bovine).